Reading from the N-terminus, the 473-residue chain is Photosystem II CP43 reaction center protein (473 aa).

A propeptide spanning residues 1 to 14 (MKTLYSLRRFYHVE) is cleaved from the precursor. An N-acetylthreonine modification is found at Thr15. Thr15 is modified (phosphothreonine). 5 helical membrane passes run 69 to 93 (LFEVAHFVPEKPMYEQGLILLPHLA), 134 to 155 (LLGPETLEESFPFFGYVWKDRN), 178 to 200 (KALYFGGVYDTWAPGGGDVRKIT), 255 to 275 (KPFAWARRALVWSGEAYLSYS), and 291 to 312 (WFNNTAYPSEFYGPTGPEASQA). Residue Glu367 coordinates [CaMn4O5] cluster. Residues 447 to 471 (RARAAAAGFEKGIDRDFEPVLSMTP) traverse the membrane as a helical segment.

Belongs to the PsbB/PsbC family. PsbC subfamily. PSII is composed of 1 copy each of membrane proteins PsbA, PsbB, PsbC, PsbD, PsbE, PsbF, PsbH, PsbI, PsbJ, PsbK, PsbL, PsbM, PsbT, PsbX, PsbY, PsbZ, Psb30/Ycf12, at least 3 peripheral proteins of the oxygen-evolving complex and a large number of cofactors. It forms dimeric complexes. Requires Binds multiple chlorophylls and provides some of the ligands for the Ca-4Mn-5O cluster of the oxygen-evolving complex. It may also provide a ligand for a Cl- that is required for oxygen evolution. PSII binds additional chlorophylls, carotenoids and specific lipids. as cofactor.

It is found in the plastid. The protein resides in the chloroplast thylakoid membrane. One of the components of the core complex of photosystem II (PSII). It binds chlorophyll and helps catalyze the primary light-induced photochemical processes of PSII. PSII is a light-driven water:plastoquinone oxidoreductase, using light energy to abstract electrons from H(2)O, generating O(2) and a proton gradient subsequently used for ATP formation. The polypeptide is Photosystem II CP43 reaction center protein (Capsella bursa-pastoris (Shepherd's purse)).